A 249-amino-acid polypeptide reads, in one-letter code: Hydroxyacylglutathione hydrolase (249 aa).

Zn(2+) is bound by residues His53, His55, Asp57, His58, His110, Asp127, and His165.

The protein belongs to the metallo-beta-lactamase superfamily. Glyoxalase II family. In terms of assembly, monomer. Zn(2+) serves as cofactor.

It catalyses the reaction an S-(2-hydroxyacyl)glutathione + H2O = a 2-hydroxy carboxylate + glutathione + H(+). It participates in secondary metabolite metabolism; methylglyoxal degradation; (R)-lactate from methylglyoxal: step 2/2. Thiolesterase that catalyzes the hydrolysis of S-D-lactoyl-glutathione to form glutathione and D-lactic acid. The chain is Hydroxyacylglutathione hydrolase from Hamiltonella defensa subsp. Acyrthosiphon pisum (strain 5AT).